We begin with the raw amino-acid sequence, 111 residues long: uncharacterized protein (111 aa).

2 helical membrane passes run 7–27 (ILNI…SMMI) and 53–73 (AFAM…TFLH).

Its subcellular location is the cell membrane. This is an uncharacterized protein from Bacillus anthracis.